The chain runs to 247 residues: MSKLFWAMLAFISRLPVPSRWSQGLDFEQYSRGIVMFPFIGLILGGVSGLIFILLQSWCGIPLAALFCILALALLTGGFHLDGLADTCDGIFSARRRERMLEIMRDSRLGTHGGLALIFVLLTKILVVSELALRGTPMLAALAAACAAGRGSAVLLMYRHRYAREEGLGNVFIGKVSGRQTCITLGLAVIVATVLLPGMQGLAAMVVTCAAIFILGQLLKRTLGGQTGDTLGAAIELGELIFLLALL.

5 helical membrane passes run 34–54 (IVMFPFIGLILGGVSGLIFIL), 59–79 (CGIPLAALFCILALALLTGGF), 113–133 (GGLALIFVLLTKILVVSELAL), 138–158 (MLAALAAACAAGRGSAVLLMY), and 187–207 (LAVIVATVLLPGMQGLAAMVV).

Belongs to the CobS family. Mg(2+) serves as cofactor.

It localises to the cell inner membrane. The enzyme catalyses alpha-ribazole + adenosylcob(III)inamide-GDP = adenosylcob(III)alamin + GMP + H(+). The catalysed reaction is alpha-ribazole 5'-phosphate + adenosylcob(III)inamide-GDP = adenosylcob(III)alamin 5'-phosphate + GMP + H(+). It functions in the pathway cofactor biosynthesis; adenosylcobalamin biosynthesis; adenosylcobalamin from cob(II)yrinate a,c-diamide: step 7/7. Its function is as follows. Joins adenosylcobinamide-GDP and alpha-ribazole to generate adenosylcobalamin (Ado-cobalamin). Also synthesizes adenosylcobalamin 5'-phosphate from adenosylcobinamide-GDP and alpha-ribazole 5'-phosphate. The chain is Adenosylcobinamide-GDP ribazoletransferase from Salmonella choleraesuis (strain SC-B67).